The chain runs to 202 residues: Matrix protein (202 aa).

The short motif at 35-38 is the PPXY motif element; sequence PPEY. Residues 115 to 151 form an essential for glycoprotein binding region; sequence KLRRTFIFQWADSRGPLEGEELEYSQEITWDDDTEFV.

The protein belongs to the lyssavirus matrix protein family. Homomultimer. Interacts with nucleoprotein and with the cytoplasmic domain of glycoprotein. Interacts with host ATP6V1A; this interaction plays an important role in virion uncoating after viral entry.

It is found in the virion membrane. It localises to the host endomembrane system. Its subcellular location is the host cytoplasm. Its function is as follows. Plays a major role in assembly, budding and uncoating of virion after membrane fusion. Completely covers the ribonucleoprotein coil and keep it in condensed bullet-shaped form. Inhibits viral transcription and stimulates replication. Plays a major role in early induction of TRAIL-mediated apoptosis in infected neurons. Inhibits the integrated stress response (ISR) in the infected cell by blocking the formation of stress granules. The chain is Matrix protein (M) from Rabies virus (strain ERA) (RABV).